We begin with the raw amino-acid sequence, 201 residues long: Recombination protein RecR (201 aa).

The segment at 57-72 (CTHCRTFTEEESCAIC) adopts a C4-type zinc-finger fold. The region spanning 81–176 (GFLCVVEQPS…KVSRIAHGIP (96 aa)) is the Toprim domain.

The protein belongs to the RecR family.

Functionally, may play a role in DNA repair. It seems to be involved in an RecBC-independent recombinational process of DNA repair. It may act with RecF and RecO. This chain is Recombination protein RecR, found in Histophilus somni (strain 2336) (Haemophilus somnus).